Here is an 88-residue protein sequence, read N- to C-terminus: Small ribosomal subunit protein bS20 (88 aa).

It belongs to the bacterial ribosomal protein bS20 family.

Functionally, binds directly to 16S ribosomal RNA. This chain is Small ribosomal subunit protein bS20, found in Bacillus licheniformis (strain ATCC 14580 / DSM 13 / JCM 2505 / CCUG 7422 / NBRC 12200 / NCIMB 9375 / NCTC 10341 / NRRL NRS-1264 / Gibson 46).